The sequence spans 748 residues: Histone-lysine N-methyltransferase EZH2 (748 aa).

Residues 184-199 (YEDDEDGDDNQDDEQD) are compositionally biased toward acidic residues. 2 disordered regions span residues 184–220 (YEDD…LRKF) and 342–428 (AERI…NIEP). Basic and acidic residues predominate over residues 200–220 (DTAKDQDDNMEDKETQPLRKF). The span at 347-359 (TPPKRPSGRRRGR) shows a compositional bias: basic residues. Over residues 362 to 374 (NNTSRPSTPTVNV) the composition is skewed to polar residues. The segment covering 376–387 (EAKDTDSDREAG) has biased composition (basic and acidic residues). The CXC domain maps to 505–607 (CRKIQLKKDG…SKNVSCKNCS (103 aa)). Residues 614 to 729 (KHLLLAPSDV…TGEELFFDYR (116 aa)) form the SET domain.

This sequence belongs to the class V-like SAM-binding methyltransferase superfamily. Histone-lysine methyltransferase family. EZ subfamily. Component of the prc2/eed-ezh2 complex.

It localises to the nucleus. It carries out the reaction L-lysyl(27)-[histone H3] + 3 S-adenosyl-L-methionine = N(6),N(6),N(6)-trimethyl-L-lysyl(27)-[histone H3] + 3 S-adenosyl-L-homocysteine + 3 H(+). In terms of biological role, polycomb group (PcG) protein. Catalytic subunit of the prc2/eed-ezh2 complex, which methylates 'Lys-9' and 'Lys-27' of histone H3, leading to transcriptional repression of the affected target gene. May repress transcription of the egr2 and en2 genes. May regulate the circadian clock via histone methylation at the promoter of the circadian genes. This chain is Histone-lysine N-methyltransferase EZH2 (ezh2-a), found in Xenopus laevis (African clawed frog).